A 620-amino-acid polypeptide reads, in one-letter code: UDP-glucose:protein N-beta-glucosyltransferase (620 aa).

The protein belongs to the glycosyltransferase 41 family. It depends on Does not require a metal cofactor. as a cofactor.

It localises to the cytoplasm. The enzyme catalyses L-asparaginyl-[protein] + UDP-alpha-D-glucose = N(4)-(beta-D-glucosyl)-L-asparaginyl-[protein] + UDP + H(+). The protein operates within protein modification; protein glycosylation. Functionally, inverting glycosyltransferase that catalyzes the transfer of one glucose moiety from UDP-glucose to an asparagine residue in peptides and proteins containing the NX(S/T) motif, resulting in their modification with a beta-linked 1,N-glucose. Likely acts as a key component of a general protein glycosylation system. Also accepts UDP-galactose as a substrate donor, albeit with low efficiency. Cannot use UDP-GlcNAc or UDP-GalNAc as substrate donor. The chain is UDP-glucose:protein N-beta-glucosyltransferase from Actinobacillus pleuropneumoniae serotype 7 (strain AP76).